The chain runs to 225 residues: Biosynthetic peptidoglycan transglycosylase (225 aa).

The chain crosses the membrane as a helical span at residues 9 to 29; the sequence is LLIFIGAILLIQLWIFSSLVW.

Belongs to the glycosyltransferase 51 family.

The protein resides in the cell inner membrane. It catalyses the reaction [GlcNAc-(1-&gt;4)-Mur2Ac(oyl-L-Ala-gamma-D-Glu-L-Lys-D-Ala-D-Ala)](n)-di-trans,octa-cis-undecaprenyl diphosphate + beta-D-GlcNAc-(1-&gt;4)-Mur2Ac(oyl-L-Ala-gamma-D-Glu-L-Lys-D-Ala-D-Ala)-di-trans,octa-cis-undecaprenyl diphosphate = [GlcNAc-(1-&gt;4)-Mur2Ac(oyl-L-Ala-gamma-D-Glu-L-Lys-D-Ala-D-Ala)](n+1)-di-trans,octa-cis-undecaprenyl diphosphate + di-trans,octa-cis-undecaprenyl diphosphate + H(+). The protein operates within cell wall biogenesis; peptidoglycan biosynthesis. Functionally, peptidoglycan polymerase that catalyzes glycan chain elongation from lipid-linked precursors. The sequence is that of Biosynthetic peptidoglycan transglycosylase from Acinetobacter baumannii (strain SDF).